The primary structure comprises 309 residues: Carboxylesterase Culp6 homolog (309 aa).

Residues 5–25 (ITVIAVLIVLALIGVGIVQYV) traverse the membrane as a helical segment. A disulfide bond links cysteine 55 and cysteine 146. Catalysis depends on residues serine 157, aspartate 253, and histidine 279. The cysteines at positions 249 and 256 are disulfide-linked.

This sequence belongs to the cutinase family.

The protein localises to the cell membrane. It catalyses the reaction a butanoate ester + H2O = an aliphatic alcohol + butanoate + H(+). With respect to regulation, inhibited by tetrahydrolipstatin (THL), a specific lipase inhibitor. Functionally, esterase that may be involved in cell wall biosynthesis and/or maintenance. Hydrolyzes pNP-butyrate (C4). In Corynebacterium glutamicum (strain ATCC 13032 / DSM 20300 / JCM 1318 / BCRC 11384 / CCUG 27702 / LMG 3730 / NBRC 12168 / NCIMB 10025 / NRRL B-2784 / 534), this protein is Carboxylesterase Culp6 homolog.